A 395-amino-acid polypeptide reads, in one-letter code: MNNVISSKDNHNHTLVFTGKGGKYFVICLVNFLLTCITLGIYAPWAMVKCRRYIYTNMTLNNQPFAYKATGGALFISVLLVFIIYIVSLSLIEHGHPGLGFTLFGLLIAIIPFMAVKGLQYQAMMTSLNGVHFGFQCSMRRAWWYMFALPVLLMVALYIVLYIISLVTIAVGGLVFSIVFLGLLAIIGIGVINGITYSKWMTLFGNGANFGIHRFSIQVNVKTCIRGCVLAMLTLFPFAVVIGYLIAPVFTDMILLSMMGNAQAGGALILQYYGQIMACYFLYFLAIIVVTSYLYVALRNLFLNNLSLANDSIRFHSSVTAHGMLWRLLVVFVISGVTLGLAYPWLKIWLVSWLAQNTQVQGDLDSLELTNDEKPLENSPLMWISRGIMPYFPFI.

Residues 1–24 (MNNVISSKDNHNHTLVFTGKGGKY) lie on the Cytoplasmic side of the membrane. Residues 25–45 (FVICLVNFLLTCITLGIYAPW) form a helical membrane-spanning segment. The Periplasmic segment spans residues 46-71 (AMVKCRRYIYTNMTLNNQPFAYKATG). A helical membrane pass occupies residues 72–92 (GALFISVLLVFIIYIVSLSLI). The Cytoplasmic segment spans residues 93–95 (EHG). The helical transmembrane segment at 96 to 116 (HPGLGFTLFGLLIAIIPFMAV) threads the bilayer. Residues 117–146 (KGLQYQAMMTSLNGVHFGFQCSMRRAWWYM) are Periplasmic-facing. The helical transmembrane segment at 147–167 (FALPVLLMVALYIVLYIISLV) threads the bilayer. T168 is a topological domain (cytoplasmic). A helical transmembrane segment spans residues 169–189 (IAVGGLVFSIVFLGLLAIIGI). The Periplasmic segment spans residues 190 to 229 (GVINGITYSKWMTLFGNGANFGIHRFSIQVNVKTCIRGCV). Residues 230 to 250 (LAMLTLFPFAVVIGYLIAPVF) form a helical membrane-spanning segment. The Cytoplasmic portion of the chain corresponds to 251-275 (TDMILLSMMGNAQAGGALILQYYGQ). Residues 276 to 296 (IMACYFLYFLAIIVVTSYLYV) traverse the membrane as a helical segment. At 297-327 (ALRNLFLNNLSLANDSIRFHSSVTAHGMLWR) the chain is on the periplasmic side. A helical membrane pass occupies residues 328–348 (LLVVFVISGVTLGLAYPWLKI). Residues 349-395 (WLVSWLAQNTQVQGDLDSLELTNDEKPLENSPLMWISRGIMPYFPFI) are Cytoplasmic-facing.

Its subcellular location is the cell inner membrane. This chain is Inner membrane protein YjgN (yjgN), found in Salmonella typhimurium (strain LT2 / SGSC1412 / ATCC 700720).